The following is a 297-amino-acid chain: Small ribosomal subunit biogenesis GTPase RsgA (297 aa).

In terms of domain architecture, CP-type G spans 65–223 (TNEIGRPAVA…IADTPGFSAI (159 aa)). GTP is bound by residues 114-117 (SKAD) and 166-174 (GQSGAGKST). C247, C252, H254, and C260 together coordinate Zn(2+).

Belongs to the TRAFAC class YlqF/YawG GTPase family. RsgA subfamily. Monomer. Associates with 30S ribosomal subunit, binds 16S rRNA. Zn(2+) is required as a cofactor.

Its subcellular location is the cytoplasm. In terms of biological role, one of several proteins that assist in the late maturation steps of the functional core of the 30S ribosomal subunit. Helps release RbfA from mature subunits. May play a role in the assembly of ribosomal proteins into the subunit. Circularly permuted GTPase that catalyzes slow GTP hydrolysis, GTPase activity is stimulated by the 30S ribosomal subunit. The polypeptide is Small ribosomal subunit biogenesis GTPase RsgA (Lactobacillus gasseri (strain ATCC 33323 / DSM 20243 / BCRC 14619 / CIP 102991 / JCM 1131 / KCTC 3163 / NCIMB 11718 / NCTC 13722 / AM63)).